The sequence spans 118 residues: Autophagy-related protein 8D (118 aa).

A lipid anchor (Phosphatidylethanolamine amidated glycine) is attached at Gly118.

Belongs to the ATG8 family. In terms of assembly, interacts with ATG4. In terms of processing, the C-terminal Gly is amidated with phosphatidylethanolamine by an activating system similar to that for ubiquitin.

It localises to the cytoplasmic vesicle. The protein resides in the autophagosome membrane. Its subcellular location is the vacuole membrane. The protein localises to the cytoplasm. It is found in the cytoskeleton. Functionally, ubiquitin-like modifier involved in autophagosomes formation. May mediate the delivery of the autophagosomes to the vacuole via the microtubule cytoskeleton. In Oryza sativa subsp. japonica (Rice), this protein is Autophagy-related protein 8D (ATG8D).